A 571-amino-acid chain; its full sequence is Putative fatty-acid--CoA ligase fadD11 (571 aa).

Residues 1 to 19 (MARLRGAGAAGRCRPGRFG) show a composition bias toward low complexity. Disordered stretches follow at residues 1 to 35 (MARL…EPDR) and 67 to 91 (RQRG…RCAH). The segment covering 78–91 (ATVRRSRSRQRCAH) has biased composition (basic residues). 2 helical membrane-spanning segments follow: residues 314 to 334 (TLAF…MSEL) and 431 to 451 (ANIE…MAIG).

Belongs to the ATP-dependent AMP-binding enzyme family.

The protein resides in the cell membrane. The protein is Putative fatty-acid--CoA ligase fadD11 (fadD11) of Mycobacterium tuberculosis (strain CDC 1551 / Oshkosh).